Here is a 1729-residue protein sequence, read N- to C-terminus: MDQYWREQEGRGLFEDDANSYVSDDDTMSSLTRMIYDKNSSRDALHSDYDSSSFNVDSSSVAYPAWNQAGEEAPVTMEGVQEILLDLTNKLGFQKDNMRNIFDYVMVLLDSRASRMSPSSALLTIHADVIGGEHANFSKWYFASHFNDGHAIGFHDMSSPIVETMTLKEAEQAWRDQMAAFSPHRMMVQVCLYFLCWGEANNVRFVPECLCFIFECAYDYYISSEAKDVDAALPKEFYLDSVITPIYRFIHAQLFEILDGKYVRRERDHSQIIGYDDINQLFWSYKGLQEIMCADKTPLLDLPPFMRYRHLSDVEWKSCFYKSYYEYRSWFHNVTNFSRIWVMHISAYWYYSAYNSPNLYTKNYHIRLNNKPPASCRWTACGLAGAIASFITLAAVVFEYIHVPRRYHSARRLWPSMLLLISTLLLNIAPVVFIFASSTKEQHYASRLVVGIVHFFFSLVCVVYYSITPLRNLVGFTTKRSGKNLANRFFTANFTPTSKTGAFVSWCLWITVLVAKFLESYFFLTLNLADSIRFLGAMRPYDCRDYILGAGLCKAQPKILLSLLYLTDLSLFFLDTYLWYILISTIYSLAYAFCLGISVWTPWRELFYRVPRRIYTKLLYTDDMEIVFKPKVLISQVWNAIIISMYREHLISRTQIQELLYHQVPSEKAGYHTLRAPNFFYSQQVKHYKQDLFPANSEAARRISFFAQSLAESIPKTSSIDAMPTFTVLVPHYSEKILLSLREIIREEDQLSRVTLLEYLKQLYPVEWRNFVDDTKLLADENDSVIGSIDNEKNGVNKAYDLPFYCVGFKSATPEYTLRTRIWASLRTQTLYRTINGFSNYSRAIKLLYRTETPELVEWTNGDPVRLDEELDLMANRKFRFCVSMQRYAKFTKEEAENAEFLLRAYPDLQIAYMDEDPQSRHNDERHLYSVLIDGHCPIMENGKRRPKYRIRLSGNPILGDGKSDNQNMSIPYIRGEYVQMIDANQDNYLEECLKIRSILAEFEQLTPPLHSPYSVNAKAADNHPVAILGAREYIFSENTGMLGDVAAGKEQTFGTLFARILSLIGGKLHYGHPDFINVLFMITRGGVSKAQKGLHVNEDIYAGMIALQRGGRIKHCDYYQCGKGRDLGFGSILNFTTKIGTGMAEQMLSREYFNLGTQLPFDRFLSFFYAHAGFHVNNMVIMFSLQLLMLVIINLGAMYTVVPVCRYRQFDSLTASLYPEGCYQLKPVLEWLKRCILSIFIVFGIAFVPLAVCELGERGAIRMVIRLAKQIFSLSPIFEIFTCQIYAQSLIANLTFGGARYIGTSRGFATVRVPFSLLYSRFSGPSLYFGSRLMYMLLFGSITAWLPHYIYFWITLTALCISPFLYNPHQFAWTDFFVDYREFMRWLFRENSRNQANSWIGNCQLCRTRVTGYKRKIYGKKADKIAMDSPRARITTMFYGEILGPLGTLFFTCIPFLFINSQPGNDDETQSTNAFIRLIIMSVAPLVLSAIIAFFFFCLGIMLRPILGDRSKTYGVYLAGVAHFLFVCVDVVVFEVLGYLEGWSFSKTLLGFVAIISIHRFAHKFFIICFLSREFRHDGANLAWWSGRWNGQGFGYMVLTQPWREFVCKTTELNMFAGDFLLSHLLLFLQAPVILIPYIDKLHSIILFWLVPSRQIRPPIYTIRQNKLRRQIVLRYATLYFSLFIAFFVLLILPFVFGKSAAGTSMDKFNLIQPATKIVYSSTKNSSV.

S23 is modified (phosphoserine). The next 6 membrane-spanning stretches (helical) occupy residues 378-398 (WTAC…AVVF), 416-436 (SMLL…FIFA), 448-468 (LVVG…YSIT), 503-523 (FVSW…SYFF), 546-566 (YILG…LLYL), and 577-597 (YLWY…CLGI). A phosphoserine mark is found at S784 and S788. 8 consecutive transmembrane segments (helical) span residues 1180–1200 (MVIM…GAMY), 1237–1257 (ILSI…CELG), 1337–1357 (MLLF…WITL), 1440–1460 (YGEI…FLFI), 1484–1504 (VAPL…GIML), 1515–1535 (YGVY…VVVF), 1550–1572 (LLGF…ICFL), and 1678–1698 (ATLY…PFVF).

It belongs to the glycosyltransferase 48 family. In terms of assembly, component of the 1,3-beta-glucan synthase (GS) complex, composed of at least the alternate catalytic subunits bgs1, bgs2, bgs3, and bgs4, and a regulatory subunit chr4.

Its subcellular location is the cell membrane. It localises to the cell septum. It carries out the reaction [(1-&gt;3)-beta-D-glucosyl](n) + UDP-alpha-D-glucose = [(1-&gt;3)-beta-D-glucosyl](n+1) + UDP + H(+). Functionally, alternate catalytic subunit of the 1,3-beta-glucan synthase (GS) complex. Synthesizes 1,3-beta-glucan, a major structural component of the fungal cell wall. Required for the assembly of the division septum and maintenance of cell polarity. The polypeptide is 1,3-beta-glucan synthase component bgs1 (bgs1) (Schizosaccharomyces pombe (strain 972 / ATCC 24843) (Fission yeast)).